The primary structure comprises 261 residues: High-affinity zinc uptake system membrane protein ZnuB (261 aa).

Residues 1–7 are Periplasmic-facing; sequence MIELLFP. The chain crosses the membrane as a helical span at residues 8 to 28; the sequence is GWLAGIMLACAAGPLGSFVVW. The Cytoplasmic portion of the chain corresponds to 29 to 53; that stretch reads RRMSYFGDTLAHASLLGVAFGLLLD. Residues 54–74 form a helical membrane-spanning segment; it reads VNPFYAVIAVTLLLAGGLVWL. Over 75–83 the chain is Periplasmic; the sequence is EKRPQLAID. A helical membrane pass occupies residues 84 to 104; that stretch reads TLLGIMAHSALSLGLVVVSLM. Residues 105-121 lie on the Cytoplasmic side of the membrane; it reads SNIRVDLMAYLFGDLLA. A helical membrane pass occupies residues 122–142; the sequence is VTPEDLISIAIGVVIVVAILF. Residues 143-177 lie on the Periplasmic side of the membrane; it reads WQWRNLLSMTISPDLAFVDGVKLQRVKLLLMLVTA. Residues 178-198 form a helical membrane-spanning segment; that stretch reads LTIGVAMKFVGALIITSLLII. Residues 199–213 are Cytoplasmic-facing; sequence PAATARRFARTPEQM. A helical membrane pass occupies residues 214-234; sequence AGVAVLVGMVAVTGGLTFSAV. Position 235 (Tyr-235) is a topological domain, periplasmic. A helical membrane pass occupies residues 236–256; that stretch reads DTPAGPSVVLCAALLFILSMM. Over 257–261 the chain is Cytoplasmic; sequence KKQAS.

The protein belongs to the ABC-3 integral membrane protein family.

Its subcellular location is the cell inner membrane. In terms of biological role, involved in the high-affinity zinc uptake transport system. This is High-affinity zinc uptake system membrane protein ZnuB (znuB) from Escherichia coli (strain K12).